Reading from the N-terminus, the 117-residue chain is Immunoglobulin lambda variable 6-57 (117 aa).

Positions 1-19 are cleaved as a signal peptide; sequence MAWAPLLLTLLAHCTGSWA. The segment at 20 to 44 is framework-1; that stretch reads NFMLTQPHSVSESPGKTVTISCTGS. The 98-residue stretch at 20 to 117 folds into the Ig-like domain; it reads NFMLTQPHSV…YYCQSYDSSN (98 aa). An intrachain disulfide couples cysteine 41 to cysteine 110. The interval 45–52 is complementarity-determining-1; the sequence is SGSIASNY. The segment at 53–69 is framework-2; the sequence is VQWYQQRPGSAPTTVIY. The interval 65-97 is disordered; it reads TTVIYEDNQRPSGVPDRFSGSIDSSSNSASLTI. A complementarity-determining-2 region spans residues 70–72; sequence EDN. Residues 73–110 form a framework-3 region; that stretch reads QRPSGVPDRFSGSIDSSSNSASLTISGLKTEDEADYYC. Residues 83-97 show a composition bias toward low complexity; that stretch reads SGSIDSSSNSASLTI. Residues 111–117 form a complementarity-determining-3 region; sequence QSYDSSN.

Immunoglobulins are composed of two identical heavy chains and two identical light chains; disulfide-linked.

It is found in the secreted. The protein resides in the cell membrane. V region of the variable domain of immunoglobulin light chains that participates in the antigen recognition. Immunoglobulins, also known as antibodies, are membrane-bound or secreted glycoproteins produced by B lymphocytes. In the recognition phase of humoral immunity, the membrane-bound immunoglobulins serve as receptors which, upon binding of a specific antigen, trigger the clonal expansion and differentiation of B lymphocytes into immunoglobulins-secreting plasma cells. Secreted immunoglobulins mediate the effector phase of humoral immunity, which results in the elimination of bound antigens. The antigen binding site is formed by the variable domain of one heavy chain, together with that of its associated light chain. Thus, each immunoglobulin has two antigen binding sites with remarkable affinity for a particular antigen. The variable domains are assembled by a process called V-(D)-J rearrangement and can then be subjected to somatic hypermutations which, after exposure to antigen and selection, allow affinity maturation for a particular antigen. This chain is Immunoglobulin lambda variable 6-57, found in Homo sapiens (Human).